A 328-amino-acid polypeptide reads, in one-letter code: Endochitinase (328 aa).

A signal peptide spans 1–27 (MKKNRMMMMIWSVGVVWMLLLVGGSYG). Residues 28–68 (EQCGRQAGGALCPGGNCCSQFGWCGSTTDYCGPGCQSQCGG) enclose the Chitin-binding type-1 domain. Intrachain disulfides connect Cys-30-Cys-45, Cys-39-Cys-51, Cys-44-Cys-58, Cys-62-Cys-66, Cys-97-Cys-159, Cys-170-Cys-178, and Cys-277-Cys-309. Glu-141 (proton donor) is an active-site residue. The propeptide at 318–328 (SLLLSDLVTSQ) is removed in mature form.

The protein belongs to the glycosyl hydrolase 19 family. Chitinase class I subfamily.

The protein localises to the vacuole. It carries out the reaction Random endo-hydrolysis of N-acetyl-beta-D-glucosaminide (1-&gt;4)-beta-linkages in chitin and chitodextrins.. Its function is as follows. Defense against chitin-containing fungal pathogens. This is Endochitinase from Phaseolus vulgaris (Kidney bean).